The primary structure comprises 442 residues: Glutamyl-tRNA reductase (442 aa).

Substrate is bound by residues 50-53, Ser109, 114-116, and Gln120; these read TCNR and EPQ. The active-site Nucleophile is the Cys51. 189–194 provides a ligand contact to NADP(+); it reads GAGEMA.

The protein belongs to the glutamyl-tRNA reductase family. Homodimer.

It catalyses the reaction (S)-4-amino-5-oxopentanoate + tRNA(Glu) + NADP(+) = L-glutamyl-tRNA(Glu) + NADPH + H(+). Its pathway is porphyrin-containing compound metabolism; protoporphyrin-IX biosynthesis; 5-aminolevulinate from L-glutamyl-tRNA(Glu): step 1/2. Functionally, catalyzes the NADPH-dependent reduction of glutamyl-tRNA(Glu) to glutamate 1-semialdehyde (GSA). The chain is Glutamyl-tRNA reductase from Nitratidesulfovibrio vulgaris (strain DSM 19637 / Miyazaki F) (Desulfovibrio vulgaris).